A 522-amino-acid polypeptide reads, in one-letter code: Transactivator/viroplasmin protein (522 aa).

Residues 488-522 (DASADEGTTDKSGPPPTRSIVEKEDVPNTSSKQVD) form a disordered region.

It belongs to the caulimoviridae viroplasmin family.

It localises to the host cytoplasm. Enhances the ribosomal termination-reinitiation event leading to the translation of major open reading frames on the polycistronic viral RNAs. The polypeptide is Transactivator/viroplasmin protein (Cauliflower mosaic virus (strain D/H) (CaMV)).